We begin with the raw amino-acid sequence, 859 residues long: Leucine--tRNA ligase (859 aa).

Residues 42–52 carry the 'HIGH' region motif; that stretch reads PYPSGRLHMGH. A 'KMSKS' region motif is present at residues 618–622; the sequence is KMSKS. ATP is bound at residue Lys621.

Belongs to the class-I aminoacyl-tRNA synthetase family.

It is found in the cytoplasm. The catalysed reaction is tRNA(Leu) + L-leucine + ATP = L-leucyl-tRNA(Leu) + AMP + diphosphate. The chain is Leucine--tRNA ligase from Shewanella sp. (strain ANA-3).